Reading from the N-terminus, the 180-residue chain is Inner membrane-spanning protein YciB (180 aa).

Helical transmembrane passes span 22–42, 50–70, 72–92, 121–141, and 149–169; these read IFVA…FTWF, MTLV…AFHS, LFIK…LLVS, MSWA…AFWL, and FKVF…GVYI.

This sequence belongs to the YciB family.

It is found in the cell inner membrane. Plays a role in cell envelope biogenesis, maintenance of cell envelope integrity and membrane homeostasis. The chain is Inner membrane-spanning protein YciB from Yersinia enterocolitica serotype O:8 / biotype 1B (strain NCTC 13174 / 8081).